The following is a 232-amino-acid chain: Sugar fermentation stimulation protein homolog (232 aa).

The protein belongs to the SfsA family.

In Shouchella clausii (strain KSM-K16) (Alkalihalobacillus clausii), this protein is Sugar fermentation stimulation protein homolog.